Reading from the N-terminus, the 340-residue chain is Ketol-acid reductoisomerase (NADP(+)) (340 aa).

Positions 3-182 constitute a KARI N-terminal Rossmann domain; sequence VTMYYEDDVE…GCARVGIIET (180 aa). Residues 26-29, arginine 49, serine 53, and 83-86 each bind NADP(+); these read YGSQ and DELQ. The active site involves histidine 108. Glycine 134 contacts NADP(+). The KARI C-terminal knotted domain occupies 183–328; the sequence is TFKEETEEDL…AELRKAMPFT (146 aa). Residues aspartate 191, glutamate 195, glutamate 227, and glutamate 231 each contribute to the Mg(2+) site. Position 252 (serine 252) interacts with substrate.

The protein belongs to the ketol-acid reductoisomerase family. Mg(2+) is required as a cofactor.

The catalysed reaction is (2R)-2,3-dihydroxy-3-methylbutanoate + NADP(+) = (2S)-2-acetolactate + NADPH + H(+). It catalyses the reaction (2R,3R)-2,3-dihydroxy-3-methylpentanoate + NADP(+) = (S)-2-ethyl-2-hydroxy-3-oxobutanoate + NADPH + H(+). It functions in the pathway amino-acid biosynthesis; L-isoleucine biosynthesis; L-isoleucine from 2-oxobutanoate: step 2/4. The protein operates within amino-acid biosynthesis; L-valine biosynthesis; L-valine from pyruvate: step 2/4. In terms of biological role, involved in the biosynthesis of branched-chain amino acids (BCAA). Catalyzes an alkyl-migration followed by a ketol-acid reduction of (S)-2-acetolactate (S2AL) to yield (R)-2,3-dihydroxy-isovalerate. In the isomerase reaction, S2AL is rearranged via a Mg-dependent methyl migration to produce 3-hydroxy-3-methyl-2-ketobutyrate (HMKB). In the reductase reaction, this 2-ketoacid undergoes a metal-dependent reduction by NADPH to yield (R)-2,3-dihydroxy-isovalerate. This is Ketol-acid reductoisomerase (NADP(+)) from Lactococcus lactis subsp. lactis (strain IL1403) (Streptococcus lactis).